Here is a 381-residue protein sequence, read N- to C-terminus: 5-amino-6-(D-ribitylamino)uracil--L-tyrosine 4-hydroxyphenyl transferase (381 aa).

The region spanning 59 to 306 (VTYVVNRNIN…TAVARIFLGN (248 aa)) is the Radical SAM core domain. Cysteine 73, cysteine 77, and cysteine 80 together coordinate [4Fe-4S] cluster.

This sequence belongs to the radical SAM superfamily. CofH family. As to quaternary structure, consists of two subunits, CofG and CofH. [4Fe-4S] cluster is required as a cofactor.

It catalyses the reaction 5-amino-6-(D-ribitylamino)uracil + L-tyrosine + S-adenosyl-L-methionine = 5-amino-5-(4-hydroxybenzyl)-6-(D-ribitylimino)-5,6-dihydrouracil + 2-iminoacetate + 5'-deoxyadenosine + L-methionine + H(+). Its pathway is cofactor biosynthesis; coenzyme F0 biosynthesis. Functionally, catalyzes the radical-mediated synthesis of 5-amino-5-(4-hydroxybenzyl)-6-(D-ribitylimino)-5,6-dihydrouracil from 5-amino-6-(D-ribitylamino)uracil and L-tyrosine. The chain is 5-amino-6-(D-ribitylamino)uracil--L-tyrosine 4-hydroxyphenyl transferase from Cyanothece sp. (strain PCC 7425 / ATCC 29141).